The following is a 179-amino-acid chain: Large ribosomal subunit protein uL5 (179 aa).

This sequence belongs to the universal ribosomal protein uL5 family. In terms of assembly, part of the 50S ribosomal subunit; part of the 5S rRNA/L5/L18/L25 subcomplex. Contacts the 5S rRNA and the P site tRNA. Forms a bridge to the 30S subunit in the 70S ribosome.

Its function is as follows. This is one of the proteins that bind and probably mediate the attachment of the 5S RNA into the large ribosomal subunit, where it forms part of the central protuberance. In the 70S ribosome it contacts protein S13 of the 30S subunit (bridge B1b), connecting the 2 subunits; this bridge is implicated in subunit movement. Contacts the P site tRNA; the 5S rRNA and some of its associated proteins might help stabilize positioning of ribosome-bound tRNAs. The polypeptide is Large ribosomal subunit protein uL5 (Prochlorococcus marinus (strain MIT 9303)).